Consider the following 277-residue polypeptide: Large ribosomal subunit protein uL2 (277 aa).

The interval 219 to 277 (TVRGSVMNPNDHPHGGGEGKAPVGRKAPSTPWGKPALGLKTRNKKAKSDKLIVRRRNEK) is disordered. Basic and acidic residues predominate over residues 264-277 (AKSDKLIVRRRNEK).

Belongs to the universal ribosomal protein uL2 family. As to quaternary structure, part of the 50S ribosomal subunit. Forms a bridge to the 30S subunit in the 70S ribosome.

One of the primary rRNA binding proteins. Required for association of the 30S and 50S subunits to form the 70S ribosome, for tRNA binding and peptide bond formation. It has been suggested to have peptidyltransferase activity; this is somewhat controversial. Makes several contacts with the 16S rRNA in the 70S ribosome. The chain is Large ribosomal subunit protein uL2 from Streptococcus pyogenes serotype M1.